The sequence spans 266 residues: Ankyrin repeat domain-containing protein 45 (266 aa).

Composition is skewed to acidic residues over residues 1–11 (MESEGPPESES) and 18–32 (QEEE…EPEE). The interval 1 to 43 (MESEGPPESESSEFFSQQEEENEEEEAQEPEETGPKNPLLQPA) is disordered. 2 ANK repeats span residues 76–105 (VGRN…NLNE) and 109–138 (RGYT…DIEA).

It is found in the cytoplasm. The protein resides in the midbody. It localises to the midbody ring. The protein localises to the cleavage furrow. Its function is as follows. May play a role during cell division. The polypeptide is Ankyrin repeat domain-containing protein 45 (Homo sapiens (Human)).